Consider the following 308-residue polypeptide: MNTKLNVKGYLNVGDNHQLYYWTQGNPNGKPVLYIHGGPGSGTDEGCLKYFDLETTWIILLDQRGCGKSKTNDIFYENNTDKLVSDFEILRQKLNIKNWTLFGGSWGSALALVYAIKHPQVVDKIFLRALFLAREKDWSEALMGLGKMFYPYEHQRFMDSIPKAYQNSYEQIVNYCYDQFQNGDESTKEKLAKAWVDWESTLLSPINKIHSTATDFKLVEKLALLECHYAVNKSFLDENFILDNISVLKNKSIYLAHGRFDLICPLYQPLALKQAFPELQLYVTNNAGHSGSDANNLATIKHLLKTYL.

Residues 30–290 form the AB hydrolase-1 domain; that stretch reads KPVLYIHGGP…LYVTNNAGHS (261 aa). Ser-105 functions as the Nucleophile in the catalytic mechanism. Asp-261 is an active-site residue. His-289 serves as the catalytic Proton donor.

Belongs to the peptidase S33 family.

The protein resides in the cytoplasm. It catalyses the reaction Release of N-terminal proline from a peptide.. Functionally, specifically catalyzes the removal of N-terminal proline residues from peptides. The sequence is that of Putative proline iminopeptidase (pip) from Mycoplasma genitalium (strain ATCC 33530 / DSM 19775 / NCTC 10195 / G37) (Mycoplasmoides genitalium).